A 1441-amino-acid chain; its full sequence is Tripeptidyl-peptidase 2 (1441 aa).

The segment at 62-89 (AESSERSNSSKKTTNKEQSDKSAESRMA) is disordered. Basic and acidic residues predominate over residues 75–85 (TNKEQSDKSAE). Residues 107–608 (ETGVLNFLQK…HGLLNVEKAF (502 aa)) enclose the Peptidase S8 domain. Catalysis depends on charge relay system residues D131, H359, and S549. Residues 1139 to 1155 (TANGAKPKAPATPQAAT) are compositionally biased toward low complexity. 2 disordered regions span residues 1139–1190 (TANG…KANA) and 1255–1274 (QKTS…EDQK). Position 1182 is a phosphoserine (S1182). The span at 1265-1274 (SADKQKEDQK) shows a compositional bias: basic and acidic residues.

This sequence belongs to the peptidase S8 family. As to quaternary structure, homooligomer; forms a complex of 6 MDa probably composed of 40 subunits. Forms a structure consisting of 2 segmented and twisted strands that form a spindle-shaped structure. Each strand is composed of 10 segments (a segment being a homodimer oriented head to head), stacking of these segments leads to the formation of a twisted single strand. 2 strands compose the fully assembled spindle.

It is found in the cytoplasm. It carries out the reaction Release of an N-terminal tripeptide from a polypeptide.. Its activity is regulated as follows. Inhibited by phenylmethanesulfonyl fluoride (PMSF) and butabindide, but not by peptidase inhibitor pepstatin, EDTA, nor bestatin. In terms of biological role, component of the proteolytic cascade acting downstream of the 26S proteasome in the ubiquitin-proteasome pathway. Efficiently cleaves Ala-Ala-Ala-polypeptide and Pro-Pro-Ala-polypeptide, Val-Leu-Lys-polypeptide only at high concentration. Does not cleave Ala-Phe-Pro-polypeptide nor Pro-Leu-Gly-polypeptide. The protein is Tripeptidyl-peptidase 2 (TppII) of Drosophila melanogaster (Fruit fly).